The primary structure comprises 225 residues: NAD(P)H-quinone oxidoreductase subunit K, chloroplastic (225 aa).

Residues C43, C44, C108, and C139 each coordinate [4Fe-4S] cluster.

The protein belongs to the complex I 20 kDa subunit family. NDH is composed of at least 16 different subunits, 5 of which are encoded in the nucleus. [4Fe-4S] cluster is required as a cofactor.

It localises to the plastid. The protein resides in the chloroplast thylakoid membrane. The catalysed reaction is a plastoquinone + NADH + (n+1) H(+)(in) = a plastoquinol + NAD(+) + n H(+)(out). It catalyses the reaction a plastoquinone + NADPH + (n+1) H(+)(in) = a plastoquinol + NADP(+) + n H(+)(out). NDH shuttles electrons from NAD(P)H:plastoquinone, via FMN and iron-sulfur (Fe-S) centers, to quinones in the photosynthetic chain and possibly in a chloroplast respiratory chain. The immediate electron acceptor for the enzyme in this species is believed to be plastoquinone. Couples the redox reaction to proton translocation, and thus conserves the redox energy in a proton gradient. The chain is NAD(P)H-quinone oxidoreductase subunit K, chloroplastic from Liriodendron tulipifera (Tuliptree).